The primary structure comprises 698 residues: MAPPGVGVGVAYLWGKGRGGRKGTPVVVTMESPNYSVVEVDGPDAEAELRTAAVAMDKGGGRGRSRSRTARQLTWVLLLRARRAAGRLASFAAAAARRFRRSPADAADELGRGRGRLMYGFIRGFLALSLLALAVELAAYWNGWRLRRPELHVPEAVEIEGWAHSAYISWMSFRADYIRRPIEFLSKACILLFVIQSMDRLVLCLGCFWIKLRKIKPRIEGDPFREGSGYQHPMVLVQIPMCNEKEVYEQSISAACQLDWPREKFLIQVLDDSSDESIQLLIKAEVSKWSHQGVNIVYRHRVLRTGYKAGNLKSAMSCDYVKDYEFVAIFDADFQPTPDFLKKTIPHFEGNPELGLVQARWSFVNKDENLLTRLQNINLCFHFEVEQQVNGVFLNFFGFNGTAGVWRIQALEESGGWLERTTVEDMDIAVRAHLNGWKFIFLNDVKVLCELPESYEAYRKQQHRWHSGPMHLFRLCLPDILTAKISSWKKANLILLFFLLRKLILPFYSFTLFCVILPLTMFVPEAELPVWVICYVPVCMSFLNILPSPRSFPFIVPYLLFENTMSVTKFNAMVSGLFKLGSSYEWIVTKKSGRSSESDLSTAAERDTKDLTLPRLQKQISESELIELKMQKERQEKAPLGAKKANKVYKKELALSLLLLTAATRSLLSAQGIHFYFLLFQGVSFLFVGLDLIGEQID.

2 helical membrane-spanning segments follow: residues 124–144 (GFLALSLLALAVELAAYWNGW) and 190–210 (ILLFVIQSMDRLVLCLGCFWI). The active site involves Asp-272. Positions 331 and 333 each coordinate substrate. Asp-425 is an active-site residue. 4 helical membrane passes run 503–523 (LILPFYSFTLFCVILPLTMFV), 528–548 (LPVWVICYVPVCMSFLNILPS), 653–668 (LALSLLLLTAATRSLL), and 673–693 (IHFYFLLFQGVSFLFVGLDLI).

Belongs to the glycosyltransferase 2 family. Plant cellulose synthase-like C subfamily.

The protein resides in the golgi apparatus membrane. Its function is as follows. Probable beta-1,4-glucan synthase rather involved in the synthesis of the xyloglucan backbone than cellulose. Seems to work simultaneously with xyloglucan 6-xylosyltransferase. Xyloglucan is a noncellulosic polysaccharides of plant cell wall and consists of a glucan backbone substituted by xylose, galactose and fucose. The polypeptide is Probable xyloglucan glycosyltransferase 2 (CSLC2) (Oryza sativa subsp. japonica (Rice)).